We begin with the raw amino-acid sequence, 640 residues long: Sodium-dependent nutrient amino acid transporter 1 (640 aa).

Positions 1 to 13 (MELKPNGNHNNNN) are enriched in low complexity. A disordered region spans residues 1–25 (MELKPNGNHNNNNAAEKSEDTEKAK). Over 1 to 30 (MELKPNGNHNNNNAAEKSEDTEKAKAERTN) the chain is Cytoplasmic. Positions 16–25 (EKSEDTEKAK) are enriched in basic and acidic residues. The next 3 membrane-spanning stretches (helical) occupy residues 31–51 (WGNG…LGNV), 64–84 (GAFL…MYYL), and 117–137 (TICI…YLFV). N-linked (GlcNAc...) asparagine glycans are attached at residues Asn-174, Asn-181, and Asn-197. The next 9 helical transmembrane spans lie at 228 to 248 (PDWK…LVIM), 257 to 277 (AAYF…IRAV), 306 to 326 (AVVQ…MFAS), 340 to 360 (IVTT…FAIL), 400 to 420 (LFSV…IVAL), 447 to 467 (CGFL…LTLV), 473 to 493 (TYVV…IYGL), 515 to 535 (CWSF…MVTI), and 551 to 571 (VAGW…GLWY).

It belongs to the sodium:neurotransmitter symporter (SNF) (TC 2.A.22) family.

It is found in the membrane. Unusual broad substrate spectrum amino acid:sodium cotransporter that promotes absorption of the D isomers of essential amino acids. Neutral amino acids are the preferred substrates, especially methionine and phenylalanine. This chain is Sodium-dependent nutrient amino acid transporter 1, found in Drosophila ananassae (Fruit fly).